A 160-amino-acid chain; its full sequence is Putative UPF0479 protein YIL177W-A (160 aa).

Helical transmembrane passes span 39 to 59 (IVFC…KVLQ) and 136 to 156 (VPMI…ISQH).

Belongs to the UPF0479 family.

Its subcellular location is the membrane. The sequence is that of Putative UPF0479 protein YIL177W-A from Saccharomyces cerevisiae (strain ATCC 204508 / S288c) (Baker's yeast).